The sequence spans 452 residues: Cysteine--tRNA ligase (452 aa).

Cys27 provides a ligand contact to Zn(2+). Positions 29–39 (PTVQDHFHIGH) match the 'HIGH' region motif. Zn(2+) contacts are provided by Asp207, His232, and Glu236. A 'KMSKS' region motif is present at residues 265–269 (KMSKS). Lys268 serves as a coordination point for ATP.

This sequence belongs to the class-I aminoacyl-tRNA synthetase family. It depends on Zn(2+) as a cofactor.

It is found in the cytoplasm. It carries out the reaction tRNA(Cys) + L-cysteine + ATP = L-cysteinyl-tRNA(Cys) + AMP + diphosphate. This Thermoplasma acidophilum (strain ATCC 25905 / DSM 1728 / JCM 9062 / NBRC 15155 / AMRC-C165) protein is Cysteine--tRNA ligase.